A 147-amino-acid chain; its full sequence is Putative protein adenylyltransferase MJ1305 (147 aa).

The GSX(10)DXD motif motif lies at 32–46 (GSYARGTAVEYSDVD). D44 and D46 together coordinate Mg(2+).

This sequence belongs to the MntA antitoxin family. Mg(2+) is required as a cofactor.

The enzyme catalyses L-tyrosyl-[protein] + ATP = O-(5'-adenylyl)-L-tyrosyl-[protein] + diphosphate. It catalyses the reaction O-(5'-adenylyl)-L-tyrosyl-[protein] + ATP = O-[5'-(adenylyl-(5'-&gt;3')-adenylyl)]-L-tyrosyl-[protein] + diphosphate. Putative antitoxin component of a putative type VII toxin-antitoxin (TA) system. Its cognate toxin might be MJ1304, which it might AMPylate. The polypeptide is Putative protein adenylyltransferase MJ1305 (Methanocaldococcus jannaschii (strain ATCC 43067 / DSM 2661 / JAL-1 / JCM 10045 / NBRC 100440) (Methanococcus jannaschii)).